Here is an 873-residue protein sequence, read N- to C-terminus: Tyrosine-protein kinase transforming protein Fps (873 aa).

Residues 1 to 46 (ASGQLHRPQPQEHTSTSAAAGTWRLTQASESRHRLPHCSAAPSHQD) are disordered. The span at 11-29 (QEHTSTSAAAGTWRLTQAS) shows a compositional bias: polar residues. An F-BAR domain is found at 50-313 (MGFGPELWCP…AVEMIDPATE (264 aa)). The segment at 445–471 (GSEEPPPALPLQEDRQSARSTDQERSG) is disordered. Residues 456-469 (QEDRQSARSTDQER) show a composition bias toward basic and acidic residues. The 90-residue stretch at 511–600 (WYHGAIPRSE…KSGIVLTRAV (90 aa)) folds into the SH2 domain. In terms of domain architecture, Protein kinase spans 612 to 865 (VLLGERIGRG…PSFGAVHQDL (254 aa)). ATP is bound by residues 618-626 (IGRGNFGEV) and K641. D734 serves as the catalytic Proton acceptor. Y764 is subject to Phosphotyrosine; by autocatalysis.

It belongs to the protein kinase superfamily. Tyr protein kinase family. Fes/fps subfamily.

The catalysed reaction is L-tyrosyl-[protein] + ATP = O-phospho-L-tyrosyl-[protein] + ADP + H(+). The protein is Tyrosine-protein kinase transforming protein Fps (V-FPS) of Gallus gallus (Chicken).